We begin with the raw amino-acid sequence, 197 residues long: Fucoxanthin-chlorophyll a-c binding protein E, chloroplastic (197 aa).

The transit peptide at 1-31 (MKFVVFASLLASAARFAPAQQSARTSVATNM) directs the protein to the chloroplast. The next 3 membrane-spanning stretches (helical) occupy residues 73-94 (ISMLAVAGYLVQENGIRLPGDI), 114-134 (ISGAGIAQIVAFIGFLELAVM), and 174-196 (GRAAQMGILALMVHEQLGVSLIP).

It belongs to the fucoxanthin chlorophyll protein family. In terms of assembly, the LHC complex of chromophytic algae is composed of fucoxanthin, chlorophyll A and C bound non-covalently by fucoxanthin chlorophyll proteins (FCPs). The ratio of the pigments in LHC; fucoxanthin: chlorophyll C: chlorophyll A; (0.6-1): (0.1-0.3): (1).

The protein resides in the plastid. The protein localises to the chloroplast thylakoid membrane. In terms of biological role, the light-harvesting complex (LHC) functions as a light receptor, it captures and delivers excitation energy to photosystems with which it is closely associated. Energy is transferred from the carotenoid and chlorophyll C (or B) to chlorophyll A and the photosynthetic reaction centers where it is used to synthesize ATP and reducing power. This is Fucoxanthin-chlorophyll a-c binding protein E, chloroplastic (FCPE) from Phaeodactylum tricornutum (Diatom).